The chain runs to 233 residues: MRARLSLLALLLIVGTAHAAYERARTNEREHMVEEQLISRDITDEATLAAMRTVPRHRFVPEDVRRSAYDDNPLPIGHGQTISQPYIVAYMTQAARLKRDSRVLEIGTGSGYQAAVLAELCDEVYSIEIVEPLAHQAAATLKETGYERVHLRIGDGYNGWPEAAPFDAILVTAGAEDVPPKLFEQLKEGGRLVIPVGPAHSTQFLKLVTKRNGKPHLHTLMPVRFVPFTREKP.

Ser-83 is an active-site residue.

Belongs to the methyltransferase superfamily. L-isoaspartyl/D-aspartyl protein methyltransferase family.

Its subcellular location is the cytoplasm. The catalysed reaction is [protein]-L-isoaspartate + S-adenosyl-L-methionine = [protein]-L-isoaspartate alpha-methyl ester + S-adenosyl-L-homocysteine. Its function is as follows. Catalyzes the methyl esterification of L-isoaspartyl residues in peptides and proteins that result from spontaneous decomposition of normal L-aspartyl and L-asparaginyl residues. It plays a role in the repair and/or degradation of damaged proteins. The polypeptide is Protein-L-isoaspartate O-methyltransferase (Opitutus terrae (strain DSM 11246 / JCM 15787 / PB90-1)).